The chain runs to 741 residues: Phage T7 exclusion protein (741 aa).

One can recognise a KAP NTPase domain in the interval 27–334 (FGNIAENISR…NSLIFLYPGM (308 aa)).

Responsible for the exclusion of phage T7 by plasmid F. Growth of bacteriophage T7 is inhibited in cells of E.coli that carries the plasmid F. The polypeptide is Phage T7 exclusion protein (pifA) (Escherichia coli (strain K12)).